The primary structure comprises 397 residues: Presenilin-like protein At2g29900 (397 aa).

Residues 1-17 (MDRNQRPRSILDSLGEE) are Cytoplasmic-facing. Residues 18–38 (LIAILTPVSICMFTVVLLVCI) form a helical membrane-spanning segment. Topologically, residues 39 to 76 (LNSDPSSSSASFSSIATAAYSESDSDSSWDKFVGALLN) are lumenal. The chain crosses the membrane as a helical span at residues 77 to 97 (SVVFVAAITVATFVLVLLFYL). Topologically, residues 98–106 (RCVKFLKFY) are cytoplasmic. Residues 107–127 (MGFSAFIVLGNLGGEILVLLI) traverse the membrane as a helical segment. The Lumenal segment spans residues 128–135 (DRFRFPID). Residues 136–156 (SITFLILLFNFSVVGVFAVFM) form a helical membrane-spanning segment. Residues 157–158 (SK) lie on the Cytoplasmic side of the membrane. A helical transmembrane segment spans residues 159–179 (FSILITQGYLVWIGVLVAYFF). Topologically, residues 180-188 (TLLPEWTTW) are lumenal. The helical transmembrane segment at 189-209 (VLLVALALYDIAAVLLPVGPL) threads the bilayer. The active site involves Asp198. At 210–305 (RLLVEMAISR…NSETFLEGIG (96 aa)) the chain is on the cytoplasmic side. The chain crosses the membrane as a helical span at residues 306–326 (LGSSGAIKLGLGDFIFYSVLV). Residue Asp318 is part of the active site. At 327 to 336 (GRAAMYDLMT) the chain is on the lumenal side. A helical membrane pass occupies residues 337 to 357 (VYACYLAIIAGLGITLMLLSV). Residues 358-366 (YQKALPALP) lie on the Cytoplasmic side of the membrane. A PAL motif is present at residues 363–365 (PAL). Positions 367-387 (VSIMLGVVFYFLARLLLEVFV) form an intramembrane region, helical. The Cytoplasmic segment spans residues 388-397 (VQCSSNLVMF).

It belongs to the peptidase A22A family. As to quaternary structure, homodimer. Probable component of the gamma-secretase complex, a complex composed of a presenilin homodimer, nicastrin, APH1 and PEN2.

The protein localises to the endoplasmic reticulum membrane. The protein resides in the golgi apparatus membrane. Functionally, probable subunit of the gamma-secretase complex, an endoprotease complex that catalyzes the intramembrane cleavage of integral membrane proteins such as Notch receptors. The protein is Presenilin-like protein At2g29900 of Arabidopsis thaliana (Mouse-ear cress).